The sequence spans 873 residues: MGLKARRAAGAAGGGGGEGGGGGGGAANPAGGDSAVAGDEERKVGLAPGDVEQVTLALGTGADKDGTLLLEGGGREEGQRRTPQGIGLLAKTPLSRPVKRNNAKYRRIQTLIYDALERPRGWALLYHALVFLIVLGCLILAVLTTFKEYETVSGDWLLLLETFAIFIFGAEFALRIWAAGCCCRYKGWRGRLKFARKPLCMLDIFVLIASVPVVAVGNQGNVLATSLRSLRFLQILRMLRMDRRGGTWKLLGSAICAHSKELITAWYIGFLTLILSSFLVYLVEKDVPEMDAQGEEMKEEFETYADALWWGLITLATIGYGDKTPKTWEGRLIAATFSLIGVSFFALPAGILGSGLALKVQEQHRQKHFEKRRKPAAELIQAAWRYYATNPNRLDLVATWRFYESVVSFPFFRKEQLEAAASQKLGLLDRVRLSNPRGSNTKGKLFTPLNVDAIEESPSKEPKPVGLNNKERFRTAFRMKAYAFWQSSEDAGTGDPMTEDRGYGNDFLIEDMIPTLKAAIRAVRILQFRLYKKKFKETLRPYDVKDVIEQYSAGHLDMLSRIKYLQTRIDMIFTPGPPSTPKHKKSQKGSAFTYPSQQSPRNEPYVARAATSETEDQSMMGKFVKVERQVHDMGKKLDFLVDMHMQHMERLQVHVTEYYPTKGASSPAEGEKKEDNRYSDLKTIICNYSESGPPDPPYSFHQVPIDRVGPYGFFAHDPVKLTRGGPSSTKAQANLPSSGSTYAERPTVLPILTLLDSCVSYHSQTELQGPYSDHISPRQRRSITRDSDTPLSLMSVNHEELERSPSGFSISQDRDDYVFGPSGGSSWMREKRYLAEGETDTDTDPFTPSGSMPMSSTGDGISDSIWTPSNKPT.

The segment at 1–41 (MGLKARRAAGAAGGGGGEGGGGGGGAANPAGGDSAVAGDEE) is disordered. Residues 1–121 (MGLKARRAAG…IYDALERPRG (121 aa)) are Cytoplasmic-facing. Residues 11–26 (AAGGGGGEGGGGGGGA) are compositionally biased toward gly residues. Position 82 is a phosphothreonine (threonine 82). The helical transmembrane segment at 122–144 (WALLYHALVFLIVLGCLILAVLT) threads the bilayer. The Extracellular portion of the chain corresponds to 145-154 (TFKEYETVSG). The helical transmembrane segment at 155-176 (DWLLLLETFAIFIFGAEFALRI) threads the bilayer. Residues 177 to 194 (WAAGCCCRYKGWRGRLKF) lie on the Cytoplasmic side of the membrane. Residues 195–214 (ARKPLCMLDIFVLIASVPVV) form a helical membrane-spanning segment. Topologically, residues 215-226 (AVGNQGNVLATS) are extracellular. Residues 227-245 (LRSLRFLQILRMLRMDRRG) form a helical; Voltage-sensor membrane-spanning segment. Arginine 244 serves as a coordination point for a 1,2-diacyl-sn-glycero-3-phospho-(1D-myo-inositol-4,5-bisphosphate). Residues 246 to 257 (GTWKLLGSAICA) lie on the Cytoplasmic side of the membrane. Residues 258-283 (HSKELITAWYIGFLTLILSSFLVYLV) form a helical membrane-spanning segment. A 1,2-diacyl-sn-glycero-3-phospho-(1D-myo-inositol-4,5-bisphosphate) is bound at residue lysine 260. Residues 284 to 303 (EKDVPEMDAQGEEMKEEFET) lie on the Extracellular side of the membrane. The pore-forming intramembrane region spans 304–316 (YADALWWGLITLA). A Selectivity filter motif is present at residues 317–322 (TIGYGD). Residues 317-327 (TIGYGDKTPKT) are Extracellular-facing. The chain crosses the membrane as a helical span at residues 328-354 (WEGRLIAATFSLIGVSFFALPAGILGS). Topologically, residues 355-873 (GLALKVQEQH…SIWTPSNKPT (519 aa)) are cytoplasmic. The tract at residues 357–538 (ALKVQEQHRQ…RLYKKKFKET (182 aa)) is mediates interaction with calmodulin. Lysine 367 lines the a 1,2-diacyl-sn-glycero-3-phospho-(1D-myo-inositol-4,5-bisphosphate) pocket. 3 disordered regions span residues 575–603 (PGPP…PRNE), 723–742 (RGGP…GSTY), and 766–873 (ELQG…NKPT). Polar residues-rich tracts occupy residues 588-601 (KGSA…QSPR), 725-741 (GPSS…SGST), and 844-873 (DPFT…NKPT).

This sequence belongs to the potassium channel family. KQT (TC 1.A.1.15) subfamily. Kv7.3/KCNQ3 sub-subfamily. In terms of assembly, heterotetramer with KCNQ2; forms heterotetrameric M-channel responsible for the native M-current. Interacts with calmodulin; the interaction is calcium-independent, constitutive and participates in the proper assembly of a functional M-channel. Heteromultimer with KCNQ5. May associate with KCNE2. Interacts with IQCJ-SCHIP1. Interacts (via the pore module) with SLC5A3/SMIT1; forms a coregulatory complex that alters ion selectivity, voltage dependence and gating kinetics of the channel. In terms of processing, KCNQ2/KCNQ3 are ubiquitinated by NEDD4L. Ubiquitination leads to protein degradation. Degradation induced by NEDD4L is inhibited by USP36. As to expression, expressed in brain and sympathetic ganglia. In brain, expressed in cortex, hippocampus and at much lower levels in cerebellum. In sympathetic ganglia, expressed at approximately equal levels in both superior cervical ganglia and prevertebral ganglia.

It localises to the cell membrane. It catalyses the reaction K(+)(in) = K(+)(out). The catalysed reaction is Rb(+)(in) = Rb(+)(out). It carries out the reaction Cs(+)(in) = Cs(+)(out). The enzyme catalyses Na(+)(in) = Na(+)(out). Phosphatidylinositol-4,5-bisphosphate (PIP2) potentiates the activation of KCNQ channels by enhancing the electro-mechanical coupling of the voltage-sensing domain (VSD) and the pore-forming domain (PD). In the closed state of the channel, PIP2 is anchored at the S2-S3 loop; upon channel activation, PIP2 interacts with the S4-S5 linker and is involved in channel gating. Calcium suppresses KCNQ2-KCNQ3 channel currents, with calcium-bound calmodulin inducing a change in channel configuration which leads to the reduction of channel affinity for PIP2 and subsequent current suppression. M-channel is blocked by XE991. Its function is as follows. Pore-forming subunit of the voltage-gated potassium (Kv) M-channel which is responsible for the M-current, a key controller of neuronal excitability. M-channel is composed of pore-forming subunits KCNQ2 and KCNQ3 assembled as heterotetramers, each subunit containing a voltage sensing domain (VSD) and a pore-forming domain (PD). The native M-current has a slowly activating and deactivating potassium conductance which plays a critical role in determining the subthreshold electrical excitability of neurons as well as the responsiveness to synaptic inputs. M-channel is selectively permeable in vitro to other cations besides potassium, in decreasing order of affinity K(+) &gt; Rb(+) &gt; Cs(+) &gt; Na(+). M-channel association with SLC5A3/SMIT1 alters channel ion selectivity, increasing Na(+) and Cs(+) permeation relative to K(+). Suppressed by activation of M1 muscarinic acetylcholine receptors. KCNQ3 also associates with KCNQ5 to form a functional channel in vitro and may also contribute to the M-current in brain. This chain is Potassium voltage-gated channel subfamily KQT member 3, found in Rattus norvegicus (Rat).